The chain runs to 130 residues: Small ribosomal subunit protein uS8 (130 aa).

This sequence belongs to the universal ribosomal protein uS8 family. As to quaternary structure, part of the 30S ribosomal subunit.

Functionally, one of the primary rRNA binding proteins, it binds directly to 16S rRNA central domain where it helps coordinate assembly of the platform of the 30S subunit. This Haloarcula marismortui (strain ATCC 43049 / DSM 3752 / JCM 8966 / VKM B-1809) (Halobacterium marismortui) protein is Small ribosomal subunit protein uS8.